The sequence spans 476 residues: Tubulointerstitial nephritis antigen (476 aa).

N-linked (GlcNAc...) asparagine glycosylation is present at Asn38. The SMB domain maps to 59-107; it reads RFGCCADRDDGCVTQFYEADALCYCDKFCERENSDCCPDYKSFCREEKG. 2 disulfide bridges follow: Cys63-Cys83 and Cys87-Cys94. Asn175, Asn314, Asn360, and Asn455 each carry an N-linked (GlcNAc...) asparagine glycan.

The protein belongs to the peptidase C1 family.

It is found in the secreted. It localises to the extracellular space. The protein localises to the extracellular matrix. Its subcellular location is the basement membrane. Mediates adhesion of proximal tubule epithelial cells via integrins alpha3-beta1 and alphaV-beta3. This is a non catalytic peptidase C1 family protein. This is Tubulointerstitial nephritis antigen (TINAG) from Bos taurus (Bovine).